Reading from the N-terminus, the 313-residue chain is Undecaprenyl-diphosphatase (313 aa).

Helical transmembrane passes span 121-141 (YRIGWYVIIATIPIGVLGFLF), 152-172 (LWLVSFMLIAFALVIAAAEHY), 187-207 (GLVMGFAQCLALIPGVSRSGA), 225-245 (FSFLLAIPAVTASGLFSLPDA), 259-279 (QLLVATIVSFVVGYASVAWLL), and 290-310 (FVGYRIVLGLVIMGLLGAGVI).

This sequence belongs to the UppP family.

The protein localises to the cell membrane. It carries out the reaction di-trans,octa-cis-undecaprenyl diphosphate + H2O = di-trans,octa-cis-undecaprenyl phosphate + phosphate + H(+). Catalyzes the dephosphorylation of undecaprenyl diphosphate (UPP). Confers resistance to bacitracin. This Nocardia farcinica (strain IFM 10152) protein is Undecaprenyl-diphosphatase.